We begin with the raw amino-acid sequence, 283 residues long: Light-independent protochlorophyllide reductase iron-sulfur ATP-binding protein (283 aa).

ATP-binding positions include 15–20 (GIGKST) and K44. S19 is a Mg(2+) binding site. Residues C100 and C134 each coordinate [4Fe-4S] cluster. Position 185 to 186 (185 to 186 (NR)) interacts with ATP.

It belongs to the NifH/BchL/ChlL family. As to quaternary structure, homodimer. Protochlorophyllide reductase is composed of three subunits; ChlL, ChlN and ChlB. The cofactor is [4Fe-4S] cluster.

It catalyses the reaction chlorophyllide a + oxidized 2[4Fe-4S]-[ferredoxin] + 2 ADP + 2 phosphate = protochlorophyllide a + reduced 2[4Fe-4S]-[ferredoxin] + 2 ATP + 2 H2O. The protein operates within porphyrin-containing compound metabolism; chlorophyll biosynthesis (light-independent). Component of the dark-operative protochlorophyllide reductase (DPOR) that uses Mg-ATP and reduced ferredoxin to reduce ring D of protochlorophyllide (Pchlide) to form chlorophyllide a (Chlide). This reaction is light-independent. The L component serves as a unique electron donor to the NB-component of the complex, and binds Mg-ATP. The sequence is that of Light-independent protochlorophyllide reductase iron-sulfur ATP-binding protein from Synechococcus sp. (strain JA-3-3Ab) (Cyanobacteria bacterium Yellowstone A-Prime).